Reading from the N-terminus, the 239-residue chain is Zwei Ig domain protein zig-7 (239 aa).

The signal sequence occupies residues 1 to 21 (MKLINCISIALLCTLVDFSSA). N-linked (GlcNAc...) asparagine glycosylation occurs at N43. One can recognise an Ig-like C2-type domain in the interval 145–211 (PHVIGAERRG…TEDHIGKYRC (67 aa)). Cysteines 164 and 211 form a disulfide.

As to expression, expressed in body wall muscles.

The protein localises to the secreted. Functionally, probably not involved in maintaining the position of ASI and ASH head neuron cell bodies and ventral nerve cord axons of PVQ, PVP, RMEV, AVK and HSN neurons. This Caenorhabditis elegans protein is Zwei Ig domain protein zig-7.